Here is a 210-residue protein sequence, read N- to C-terminus: Chaperone protein TorD (210 aa).

The protein belongs to the TorD/DmsD family. TorD subfamily.

The protein localises to the cytoplasm. Involved in the biogenesis of TorA. Acts on TorA before the insertion of the molybdenum cofactor and, as a result, probably favors a conformation of the apoenzyme that is competent for acquiring the cofactor. This chain is Chaperone protein TorD, found in Salmonella schwarzengrund (strain CVM19633).